A 213-amino-acid chain; its full sequence is MVQLRFCVLGSIAGSVLRASATWTCVAGRAGRKGAGWECGGARSFSSAAVTMAPIKVGDTIPSVEVFEGEPGKKVNLAELFKDKKGVLFGVPGAFTPGCSKTHLPGFVEQAGALKAKGAQVVACLSVNDAFVTAEWGRAHQAEGKVQLLADPTGAFGKETDLLLDDSLVSLFGNRRLKRFSMVIDKGVVKALNVEPDGTGLTCSLAPNILSQL.

The transit peptide at 1–51 (MVQLRFCVLGSIAGSVLRASATWTCVAGRAGRKGAGWECGGARSFSSAAVT) directs the protein to the mitochondrion. A Thioredoxin domain is found at 55-213 (IKVGDTIPSV…SLAPNILSQL (159 aa)). Lys74 carries the post-translational modification N6-acetyllysine. Lys82 carries the post-translational modification N6-acetyllysine; alternate. Position 82 is an N6-succinyllysine; alternate (Lys82). Cys99 (cysteine sulfenic acid (-SOH) intermediate) is an active-site residue. Cys99 carries S-palmitoyl cysteine lipidation. Cys99 and Cys203 form a disulfide bridge. The residue at position 115 (Lys115) is an N6-succinyllysine. A phosphoserine mark is found at Ser170 and Ser181. The Microbody targeting signal motif lies at 211 to 213 (SQL).

Belongs to the peroxiredoxin family. Prx5 subfamily. As to quaternary structure, monomer. S-palmitoylated. Palmitoylation occurs on the active site, inhibiting its reactivity; therefore PRDX5 palmitoylation status determines its antioxidant capacity. Post-translationally, S-palmitoylated. Depalmitoylated by ABHD10.

Its subcellular location is the mitochondrion. The protein resides in the cytoplasm. The protein localises to the peroxisome matrix. The catalysed reaction is a hydroperoxide + [thioredoxin]-dithiol = an alcohol + [thioredoxin]-disulfide + H2O. Its function is as follows. Thiol-specific peroxidase that catalyzes the reduction of hydrogen peroxide and organic hydroperoxides to water and alcohols, respectively. Plays a role in cell protection against oxidative stress by detoxifying peroxides and as sensor of hydrogen peroxide-mediated signaling events. The polypeptide is Peroxiredoxin-5, mitochondrial (Rattus norvegicus (Rat)).